A 220-amino-acid chain; its full sequence is Iron-sulfur cluster repair protein YtfE (220 aa).

Belongs to the RIC family. YtfE subfamily. In terms of assembly, homodimer.

It localises to the cytoplasm. Di-iron-containing protein involved in the repair of iron-sulfur clusters damaged by oxidative and nitrosative stress conditions. This is Iron-sulfur cluster repair protein YtfE from Shigella boydii serotype 4 (strain Sb227).